A 564-amino-acid chain; its full sequence is 5-hydroxytryptamine receptor 1 (564 aa).

Residues 1–26 are disordered; it reads MALSGQDWRRHQSHRQHRNHRTQGNH. Residues 11-23 show a composition bias toward basic residues; it reads HQSHRQHRNHRTQ. Residues 29–51 traverse the membrane as a helical segment; it reads LISTATLTLFVLFLSSWIAYAAG. Tandem repeats lie at residues 89–90, 91–92, 93–94, 95–96, 97–98, 99–100, 101–102, 103–104, and 105–106. The 9 X 2 AA tandem repeats of G-S stretch occupies residues 89–106; the sequence is GSGSGSGSGSGSGSGSGS. A helical transmembrane segment spans residues 165–188; the sequence is VSIVLLIVILGTVVGNVLVCIAVC. At 189-198 the chain is on the cytoplasmic side; the sequence is MVRKLRRPCN. The chain crosses the membrane as a helical span at residues 199 to 222; that stretch reads YLLVSLALSDLCVALLVMPMALLY. Topologically, residues 223-236 are extracellular; the sequence is EVLEKWNFGPLLCD. A disulfide bridge connects residues Cys235 and Cys314. Residues 237–258 form a helical membrane-spanning segment; that stretch reads IWVSFDVLCCTASILNLCAISV. Residues 238-247 form an agonist binding region; that stretch reads WVSFDVLCCT. Asp242 and Thr247 together coordinate ergotamine. The DRY motif; important for ligand-induced conformation changes signature appears at 259–261; the sequence is DRY. At 259 to 278 the chain is on the cytoplasmic side; the sequence is DRYLAITKPLEYGVKRTPRR. Residues 279–302 form a helical membrane-spanning segment; sequence MMLCVGIVWLAAACISLPPLLILG. Residues 303-330 are Extracellular-facing; it reads NEHEDEEGQPICTVCQNFAYQIYATLGS. Residues 331–353 form a helical membrane-spanning segment; sequence FYIPLSVMLFVYYQIFRAARRIV. Over 354–454 the chain is Cytoplasmic; sequence LEEKRAQTHL…QLAKEKKAST (101 aa). Positions 367-396 are disordered; that stretch reads LNGTGSPSAPQAPPLGHTELASSGNGQRHS. The segment covering 386 to 396 has biased composition (polar residues); sequence LASSGNGQRHS. A helical transmembrane segment spans residues 455-476; the sequence is TLGIIMSAFTVCWLPFFILALI. Over 477 to 487 the chain is Extracellular; the sequence is RPFETMHVPAS. A helical membrane pass occupies residues 488-510; it reads LSSLFLWLGYANSLLNPIIYATL. The NPxxY motif; important for ligand-induced conformation changes and signaling motif lies at 503-507; it reads NPIIY. The Cytoplasmic portion of the chain corresponds to 511 to 564; sequence NRDFRKPFQEILYFRCSSLNTMMRENYYQDQYGEPPSQRVMLGDERHGARESFL.

The protein belongs to the G-protein coupled receptor 1 family. 5-hydroxytryptamine receptor subfamily. As to expression, expressed predominantly in adult heads.

Its subcellular location is the cell membrane. Its function is as follows. G-protein coupled receptor for 5-hydroxytryptamine (serotonin). Also functions as a receptor for various alkaloids. Ligand binding causes a conformation change that triggers signaling via guanine nucleotide-binding proteins (G proteins) and modulates the activity of down-stream effectors, such as adenylate cyclase. Signaling activates adenylate cyclase activity. This chain is 5-hydroxytryptamine receptor 1 (5-HT7), found in Drosophila melanogaster (Fruit fly).